A 550-amino-acid chain; its full sequence is U-box domain-containing protein 40 (550 aa).

Basic and acidic residues predominate over residues 19–29 (KSDNLSRRESL). The disordered stretch occupies residues 19 to 55 (KSDNLSRRESLAGKSKWRTSLSRSSSSSSSNNNSPTK). Over residues 38-52 (SLSRSSSSSSSNNNS) the composition is skewed to low complexity. Residues 57–127 (EIPAEFLCPI…HSWCERRCFP (71 aa)) form the U-box domain. ARM repeat units lie at residues 260–299 (ESSR…NLSL), 301–340 (KSNK…SLAL), 342–381 (DENK…HLSL), 383–420 (QSNR…NMAS), and 422–464 (PVSR…GLSH).

It catalyses the reaction S-ubiquitinyl-[E2 ubiquitin-conjugating enzyme]-L-cysteine + [acceptor protein]-L-lysine = [E2 ubiquitin-conjugating enzyme]-L-cysteine + N(6)-ubiquitinyl-[acceptor protein]-L-lysine.. It functions in the pathway protein modification; protein ubiquitination. Functions as an E3 ubiquitin ligase. In Arabidopsis thaliana (Mouse-ear cress), this protein is U-box domain-containing protein 40 (PUB40).